Here is a 408-residue protein sequence, read N- to C-terminus: Homogentisate geranylgeranyltransferase (408 aa).

Residues 1 to 62 (MQAVTAAAAA…TVMHKFSAIS (62 aa)) constitute a chloroplast transit peptide. The next 9 membrane-spanning stretches (helical) occupy residues 122-142 (HTIFGTIIGITSVSLLPMKSI), 156-176 (ALTAALCMNIYVVGLNQLYDI), 194-214 (SVATGVFLVLAFLIMSFSIGI), 221-241 (LMCALIVSFLLGSAYSIEAPF), 248-268 (ALLAASCILFVRAILVQLAFF), 286-306 (LVFATLFMCCFSAVIALFKDI), 329-349 (VYQLCISILLTAYGAATLVGA), 352-372 (TNLFQKIITVSGHGLLALTLW), and 386-406 (VTSFYMFIWKLFYAEYFLIPF).

This sequence belongs to the UbiA prenyltransferase family. Expressed in seeds.

The protein resides in the plastid. It localises to the chloroplast membrane. It carries out the reaction homogentisate + (2E,6E,10E)-geranylgeranyl diphosphate + H(+) = 6-geranylgeranyl-2-methylbenzene-1,4-diol + CO2 + diphosphate. It participates in cofactor biosynthesis; tocopherol biosynthesis. Involved in the synthesis of tocotrienol (vitamin E). Catalyzes the condensation of homogentisate and geranylgeranyl diphosphate to form 2-methyl-6-geranylgeranylbenzoquinol. Possesses low activity with phytyl diphosphate as substrate. The chain is Homogentisate geranylgeranyltransferase from Hordeum vulgare (Barley).